Consider the following 340-residue polypeptide: uncharacterized protein (340 aa).

The first 20 residues, 1–20, serve as a signal peptide directing secretion; sequence MGGARRLKLDGSIPNQLARA.

This is an uncharacterized protein from Mycobacterium tuberculosis (strain CDC 1551 / Oshkosh).